Reading from the N-terminus, the 102-residue chain is Small ribosomal subunit protein uS10 (102 aa).

Belongs to the universal ribosomal protein uS10 family. In terms of assembly, part of the 30S ribosomal subunit.

Involved in the binding of tRNA to the ribosomes. This is Small ribosomal subunit protein uS10 from Rhodospirillum rubrum (strain ATCC 11170 / ATH 1.1.1 / DSM 467 / LMG 4362 / NCIMB 8255 / S1).